The sequence spans 255 residues: Adenosylcobinamide-GDP ribazoletransferase (255 aa).

6 consecutive transmembrane segments (helical) span residues Leu-43–Phe-63, Pro-64–His-84, Ile-113–Thr-133, Phe-141–Tyr-161, Leu-195–Phe-215, and Cys-234–Val-254.

This sequence belongs to the CobS family. It depends on Mg(2+) as a cofactor.

It localises to the cell inner membrane. The enzyme catalyses alpha-ribazole + adenosylcob(III)inamide-GDP = adenosylcob(III)alamin + GMP + H(+). The catalysed reaction is alpha-ribazole 5'-phosphate + adenosylcob(III)inamide-GDP = adenosylcob(III)alamin 5'-phosphate + GMP + H(+). The protein operates within cofactor biosynthesis; adenosylcobalamin biosynthesis; adenosylcobalamin from cob(II)yrinate a,c-diamide: step 7/7. Joins adenosylcobinamide-GDP and alpha-ribazole to generate adenosylcobalamin (Ado-cobalamin). Also synthesizes adenosylcobalamin 5'-phosphate from adenosylcobinamide-GDP and alpha-ribazole 5'-phosphate. The chain is Adenosylcobinamide-GDP ribazoletransferase from Vibrio vulnificus (strain CMCP6).